The sequence spans 1551 residues: ABC-type transporter phomO (1551 aa).

A run of 7 helical transmembrane segments spans residues 34–54 (LYFE…LLAA), 110–130 (CTAG…CTTV), 139–159 (SVPA…LAHF), 172–192 (SSSL…APLV), 202–222 (GSAL…LIAV), 314–334 (LGLY…FTLA), and 358–378 (GLIG…GWYW). The ABC transmembrane type-1 1 domain occupies 326 to 599 (LCLAGFTLAQ…LLQIIPSFGA (274 aa)). Residue Asn-384 is glycosylated (N-linked (GlcNAc...) asparagine). 4 consecutive transmembrane segments (helical) span residues 428–448 (LAYA…TWML), 452–472 (VGPP…ASTY), 535–555 (LIVG…VLVF), and 577–597 (LIWI…IPSF). Residues 645 to 861 (IHNSSFSYTD…VEDENGDVDN (217 aa)) form the ABC transporter 1 domain. An N-linked (GlcNAc...) asparagine glycan is attached at Asn-647. 678–685 (GPAGCGKS) contributes to the ATP binding site. A glycan (N-linked (GlcNAc...) asparagine) is linked at Asn-721. Positions 843 to 889 (YQFPPSQADVEDENGDVDNGAENTRPRESSHTTEAQSGPPEPKSKPT) are disordered. The next 4 membrane-spanning stretches (helical) occupy residues 903–923 (SIGF…AFCL), 959–979 (VLPL…IVPL), 1027–1044 (LFNT…VILI), and 1137–1157 (LVLN…AVGL). Residues 910–1199 (VLFIGGGIIF…LLTAWTSLET (290 aa)) form the ABC transmembrane type-1 2 domain. Asn-1179 carries an N-linked (GlcNAc...) asparagine glycan. A compositionally biased stretch (basic and acidic residues) spans 1219–1228 (DVLVRPDSLD). The segment at 1219 to 1296 (DVLVRPDSLD…HEATTITTTS (78 aa)) is disordered. Residues 1259-1270 (YDDDDESDENTD) are compositionally biased toward acidic residues. Residues 1287–1535 (HEATTITTTS…SDIFAFFGRS (249 aa)) form the ABC transporter 2 domain. 1323–1330 (GRTGSGKS) contributes to the ATP binding site. Asn-1486 carries N-linked (GlcNAc...) asparagine glycosylation.

Belongs to the ABC transporter superfamily. ABCC family. Conjugate transporter (TC 3.A.1.208) subfamily.

Its subcellular location is the membrane. Functionally, ABC-type transporter; part of the gene cluster that mediates the biosynthesis of the phomopsins, a group of hexapeptide mycotoxins which infects lupins and causes lupinosis disease in livestock. The sequence is that of ABC-type transporter phomO from Diaporthe leptostromiformis (Lupinosis disease fungus).